We begin with the raw amino-acid sequence, 375 residues long: uncharacterized protein (375 aa).

Residues 52–301 form the GP-PDE domain; it reads VLLSAHRGSW…KQGFATYHES (250 aa).

This is an uncharacterized protein from Sinorhizobium fredii (strain NBRC 101917 / NGR234).